Consider the following 181-residue polypeptide: Adenylate kinase 2 (181 aa).

10-15 (GSGKST) provides a ligand contact to ATP. Residues 30 to 59 (SMGGILREAIANATPLGIKAKPYVERGDLL) form an NMP region. Residues R36, 57–59 (DLL), 85–88 (GYPR), and Q92 each bind AMP. Residues 126–132 (NRSLFDD) are LID. R127 is an ATP binding site. R140 is a binding site for AMP. Residue P168 participates in ATP binding.

Belongs to the adenylate kinase family. Monomer.

Its subcellular location is the cytoplasm. It catalyses the reaction AMP + ATP = 2 ADP. The protein operates within purine metabolism; AMP biosynthesis via salvage pathway; AMP from ADP: step 1/1. Its function is as follows. Catalyzes the reversible transfer of the terminal phosphate group between ATP and AMP. Plays an important role in cellular energy homeostasis and in adenine nucleotide metabolism. The polypeptide is Adenylate kinase 2 (Synechocystis sp. (strain ATCC 27184 / PCC 6803 / Kazusa)).